The primary structure comprises 432 residues: Putative D-alanyl-D-alanine carboxypeptidase (432 aa).

A helical; Signal-anchor membrane pass occupies residues 7–25 (ATVLLTFSLSAFAVEYPVL).

It belongs to the peptidase S12 family. YfeW subfamily.

The protein localises to the cell inner membrane. The catalysed reaction is Preferential cleavage: (Ac)2-L-Lys-D-Ala-|-D-Ala. Also transpeptidation of peptidyl-alanyl moieties that are N-acyl substituents of D-alanine.. This Salmonella agona (strain SL483) protein is Putative D-alanyl-D-alanine carboxypeptidase.